Here is a 357-residue protein sequence, read N- to C-terminus: Histidinol-phosphate aminotransferase (357 aa).

Lys218 is subject to N6-(pyridoxal phosphate)lysine.

The protein belongs to the class-II pyridoxal-phosphate-dependent aminotransferase family. Histidinol-phosphate aminotransferase subfamily. Homodimer. Requires pyridoxal 5'-phosphate as cofactor.

The enzyme catalyses L-histidinol phosphate + 2-oxoglutarate = 3-(imidazol-4-yl)-2-oxopropyl phosphate + L-glutamate. It participates in amino-acid biosynthesis; L-histidine biosynthesis; L-histidine from 5-phospho-alpha-D-ribose 1-diphosphate: step 7/9. This Prosthecochloris aestuarii (strain DSM 271 / SK 413) protein is Histidinol-phosphate aminotransferase.